The primary structure comprises 1235 residues: DNA polymerase catalytic subunit (1235 aa).

Disordered regions lie at residues 640-693 (QGRF…AGRH) and 1098-1134 (AAAPGDEPAPPAALPSPAKRPRETPSHADPPGGASKP). Positions 650–661 (APKRPAAAREDE) are enriched in basic and acidic residues. Over residues 662 to 675 (ERPEEEGEDEDERE) the composition is skewed to acidic residues. The span at 676-691 (EGGGEREPEGARETAG) shows a compositional bias: basic and acidic residues.

The protein belongs to the DNA polymerase type-B family. In terms of assembly, forms a complex with the ssDNA-binding protein UL29, the DNA polymerase processivity factor, and the alkaline exonuclease. Interacts with the putative helicase-primase complex subunit UL8; this interaction may coordinate leading and lagging strand DNA synthesis at the replication fork.

The protein resides in the host nucleus. It catalyses the reaction DNA(n) + a 2'-deoxyribonucleoside 5'-triphosphate = DNA(n+1) + diphosphate. The catalysed reaction is Endonucleolytic cleavage to 5'-phosphomonoester.. In terms of biological role, replicates viral genomic DNA. The replication complex is composed of six viral proteins: the DNA polymerase, processivity factor, primase, primase-associated factor, helicase, and ssDNA-binding protein. Additionally, the polymerase contains an intrinsic ribonuclease H (RNase H) activity that specifically degrades RNA/DNA heteroduplexes or duplex DNA substrates in the 5' to 3' direction. Therefore, it can catalyze the excision of the RNA primers that initiate the synthesis of Okazaki fragments at a replication fork during viral DNA replication. In Human herpesvirus 1 (strain KOS) (HHV-1), this protein is DNA polymerase catalytic subunit.